We begin with the raw amino-acid sequence, 310 residues long: Aspartate carbamoyltransferase catalytic subunit 1 (310 aa).

Residues arginine 55 and threonine 56 each coordinate carbamoyl phosphate. Lysine 85 lines the L-aspartate pocket. Carbamoyl phosphate contacts are provided by arginine 106, histidine 134, and glutamine 137. Arginine 167 and arginine 228 together coordinate L-aspartate. 2 residues coordinate carbamoyl phosphate: leucine 266 and proline 267.

It belongs to the aspartate/ornithine carbamoyltransferase superfamily. ATCase family. Heterododecamer (2C3:3R2) of six catalytic PyrB chains organized as two trimers (C3), and six regulatory PyrI chains organized as three dimers (R2).

The catalysed reaction is carbamoyl phosphate + L-aspartate = N-carbamoyl-L-aspartate + phosphate + H(+). Its pathway is pyrimidine metabolism; UMP biosynthesis via de novo pathway; (S)-dihydroorotate from bicarbonate: step 2/3. Its function is as follows. Catalyzes the condensation of carbamoyl phosphate and aspartate to form carbamoyl aspartate and inorganic phosphate, the committed step in the de novo pyrimidine nucleotide biosynthesis pathway. This chain is Aspartate carbamoyltransferase catalytic subunit 1, found in Shewanella halifaxensis (strain HAW-EB4).